A 256-amino-acid polypeptide reads, in one-letter code: MLNIGQFSFHSRLLLGTGKFPDFDVQQKAIDVSEAEILTFAVRRMDIFDAKQPNLLEKLDVKKYTLLPNTAGAKNAEEAVRIAKLAKASGLCDMIKVEVIGDDRTLLPDPVETLKASEMLLEEGFIVLPYTSDDVVLARKLQELGVHAIMPGASPIGSGLGIVNPLNLSFIIEQATVPVIVDAGIGSPADAAFAMELGADGVLLNTAVSGANDPIKMAYAMKLGIEAGRLGFEAGRIARKRCATASSPLEGMSVVE.

Lys-96 (schiff-base intermediate with DXP) is an active-site residue. Residues Gly-157, 183 to 184 (AG), and 205 to 206 (NT) contribute to the 1-deoxy-D-xylulose 5-phosphate site.

The protein belongs to the ThiG family. In terms of assembly, homotetramer. Forms heterodimers with either ThiH or ThiS.

It is found in the cytoplasm. It carries out the reaction [ThiS sulfur-carrier protein]-C-terminal-Gly-aminoethanethioate + 2-iminoacetate + 1-deoxy-D-xylulose 5-phosphate = [ThiS sulfur-carrier protein]-C-terminal Gly-Gly + 2-[(2R,5Z)-2-carboxy-4-methylthiazol-5(2H)-ylidene]ethyl phosphate + 2 H2O + H(+). Its pathway is cofactor biosynthesis; thiamine diphosphate biosynthesis. Its function is as follows. Catalyzes the rearrangement of 1-deoxy-D-xylulose 5-phosphate (DXP) to produce the thiazole phosphate moiety of thiamine. Sulfur is provided by the thiocarboxylate moiety of the carrier protein ThiS. In vitro, sulfur can be provided by H(2)S. In Bacillus mycoides (strain KBAB4) (Bacillus weihenstephanensis), this protein is Thiazole synthase.